Reading from the N-terminus, the 428-residue chain is Adenylosuccinate synthetase (428 aa).

Residues 12 to 18 (GDEGKGK) and 40 to 42 (GHT) contribute to the GTP site. The active-site Proton acceptor is aspartate 13. 2 residues coordinate Mg(2+): aspartate 13 and glycine 40. Residues 13–16 (DEGK), 38–41 (NAGH), threonine 128, arginine 142, glutamine 223, threonine 238, and arginine 302 each bind IMP. The active-site Proton donor is the histidine 41. 298-304 (TTTGRPR) lines the substrate pocket. GTP-binding positions include arginine 304, 330-332 (KLD), and 412-414 (SVG).

This sequence belongs to the adenylosuccinate synthetase family. As to quaternary structure, homodimer. The cofactor is Mg(2+).

Its subcellular location is the cytoplasm. It catalyses the reaction IMP + L-aspartate + GTP = N(6)-(1,2-dicarboxyethyl)-AMP + GDP + phosphate + 2 H(+). The protein operates within purine metabolism; AMP biosynthesis via de novo pathway; AMP from IMP: step 1/2. Plays an important role in the de novo pathway of purine nucleotide biosynthesis. Catalyzes the first committed step in the biosynthesis of AMP from IMP. This Brevibacillus brevis (strain 47 / JCM 6285 / NBRC 100599) protein is Adenylosuccinate synthetase.